The following is a 311-amino-acid chain: Vomeronasal type-1 receptor 105 (311 aa).

Residues M1–T17 are Extracellular-facing. A helical transmembrane segment spans residues F18–F38. At K39–D50 the chain is on the cytoplasmic side. Residues L51 to A71 traverse the membrane as a helical segment. Residues T72–R94 are Extracellular-facing. A disulfide bond links C86 and C173. A helical transmembrane segment spans residues T95–L115. The Cytoplasmic portion of the chain corresponds to S116–C135. The chain crosses the membrane as a helical span at residues A136–I156. Topologically, residues A157–T188 are extracellular. N-linked (GlcNAc...) asparagine glycosylation is present at N160. The chain crosses the membrane as a helical span at residues L189–V209. Topologically, residues A210 to R239 are cytoplasmic. The helical transmembrane segment at S240 to S260 threads the bilayer. The Extracellular portion of the chain corresponds to S261 to S271. The chain crosses the membrane as a helical span at residues Y272–V292. At T293 to V311 the chain is on the cytoplasmic side.

It belongs to the G-protein coupled receptor 1 family. In terms of tissue distribution, expressed in 1-4% of neurons of the vomeronasal organ. Only one pheromone receptor gene may be expressed in a particular neuron. Not expressed in the main olfactory epithelium.

Its subcellular location is the cell membrane. Its function is as follows. Putative pheromone receptor implicated in the regulation of social as well as reproductive behavior. The sequence is that of Vomeronasal type-1 receptor 105 (Vom1r105) from Rattus norvegicus (Rat).